Here is a 268-residue protein sequence, read N- to C-terminus: Resolvase (268 aa).

Residues glutamate 47–arginine 250 enclose the Tyr recombinase domain. Catalysis depends on residues arginine 82, lysine 114, histidine 202, arginine 205, and histidine 228. Tyrosine 237 serves as the catalytic O-(3'-phospho-DNA)-tyrosine intermediate.

It belongs to the 'phage' integrase family.

Acts as a repressor of transcription and as a site-specific resolvase that cleaves at the RfsF site. The sequence is that of Resolvase (resD) from Escherichia coli (strain K12).